A 343-amino-acid chain; its full sequence is N-acetyl-gamma-glutamyl-phosphate reductase (343 aa).

Cys-146 is an active-site residue.

Belongs to the NAGSA dehydrogenase family. Type 1 subfamily.

The protein localises to the cytoplasm. It carries out the reaction N-acetyl-L-glutamate 5-semialdehyde + phosphate + NADP(+) = N-acetyl-L-glutamyl 5-phosphate + NADPH + H(+). It participates in amino-acid biosynthesis; L-arginine biosynthesis; N(2)-acetyl-L-ornithine from L-glutamate: step 3/4. Catalyzes the NADPH-dependent reduction of N-acetyl-5-glutamyl phosphate to yield N-acetyl-L-glutamate 5-semialdehyde. In Paenarthrobacter aurescens (strain TC1), this protein is N-acetyl-gamma-glutamyl-phosphate reductase.